Reading from the N-terminus, the 577-residue chain is Myb-like protein N (577 aa).

Disordered regions lie at residues 1 to 23, 206 to 225, and 240 to 264; these read MMTI…NIYT, TPFS…SPLN, and SSSS…LSSS. The segment covering 213–225 has biased composition (low complexity); sequence PNSPNSTSSSPLN. HTH myb-type domains are found at residues 403 to 465 and 466 to 517; these read KKST…CPAI and RKGS…SREV. DNA-binding regions (H-T-H motif) lie at residues 437–461 and 489–513; these read WKKI…KRVL and WKNV…KSCM. The 53-residue stretch at 518-570 folds into the Myb-like domain; the sequence is PWTPKEDEILQKKVIENKQDSTKEIGWMDLSKAMARARQTKIPRTALECKIRF.

The protein localises to the nucleus. The sequence is that of Myb-like protein N (mybN) from Dictyostelium discoideum (Social amoeba).